An 822-amino-acid chain; its full sequence is MRLLKFLWWTCVTLICGVLLSFSGAYLYLSPSLPSVEALRNVQLQIPLKVYSEDGKLISEFGEMRRTPIRFADIPQDFIHALLSAEDDNFANHYGVDVKSLMRAAAQLLKSGHIQTGGSTITMQVAKNYFLTNERSFSRKINEILLALQIERQLTKDEILELYVNKIYLGNRAYGIEAAAQVYYGKPIKDLSLAEMAMIAGLPKAPSRYNPLVNPTRSTERRNWILERMLKLGFIDQQRYQAAVEEPINASYHVQTPELNAPYIAEMARAEMVGRYGSEAYTEGYKVITTVRSDLQNAASQSVRDGLIDYDQRHGYRGPETRLPGQTRDAWLKHLGQQRSIGGLEPAIVTQVEKSGIMVMTRDGKEEAVTWDSMKWARPFLSNNSMGPMPRQPADVAQAGDQIRVQRQEDGTLRFVQIPAAQSALISLDPKDGAIRSLVGGFSFEQSNYNRAIQAKRQPGSSFKPFIYSAALDNGFTAASLVNDAPIVFVDEYLDKVWRPKNDTNTFLGPIPLREALYKSRNMVSIRVLQGLGIERAISYITKFGFQRDELPRNFSLALGTATVTPMEIAGAWSVFANGGYKVNPYVIERIESRDGQVLYQANPPRVPVEEQVAADAEDAGNPGDPEHPESAEGEGSIEAQQVAAKAQTTFEPTPAERIIDARTAYIMTSMLQDVIKRGTGRRALALKRTDLAGKTGTTNDSKDGWFSGYNSDYVTSVWVGFDQPETLGRREYGGTVALPIWIRYMGFALKDKPMHTMAEPPGIVSLRIDPVTGRSAAPGTPGAYFEMFKNEDTPPSVNELPPGSFPGSPLPDDEGAPIDLF.

Over 1–5 (MRLLK) the chain is Cytoplasmic. A helical; Signal-anchor for type II membrane protein transmembrane segment spans residues 6–26 (FLWWTCVTLICGVLLSFSGAY). Residues 27–822 (LYLSPSLPSV…DDEGAPIDLF (796 aa)) are Periplasmic-facing. Residues 48-216 (LKVYSEDGKL…SRYNPLVNPT (169 aa)) form a transglycosylase region. The active-site Proton donor; for transglycosylase activity is the Glu86. A transpeptidase region spans residues 403-744 (IRVQRQEDGT…GTVALPIWIR (342 aa)). Ser461 acts as the Acyl-ester intermediate; for transpeptidase activity in catalysis. Disordered stretches follow at residues 614–654 (AADA…FEPT) and 790–822 (KNED…IDLF). Acidic residues predominate over residues 812–822 (PDDEGAPIDLF).

The protein in the N-terminal section; belongs to the glycosyltransferase 51 family. In the C-terminal section; belongs to the transpeptidase family.

It is found in the cell inner membrane. The catalysed reaction is [GlcNAc-(1-&gt;4)-Mur2Ac(oyl-L-Ala-gamma-D-Glu-L-Lys-D-Ala-D-Ala)](n)-di-trans,octa-cis-undecaprenyl diphosphate + beta-D-GlcNAc-(1-&gt;4)-Mur2Ac(oyl-L-Ala-gamma-D-Glu-L-Lys-D-Ala-D-Ala)-di-trans,octa-cis-undecaprenyl diphosphate = [GlcNAc-(1-&gt;4)-Mur2Ac(oyl-L-Ala-gamma-D-Glu-L-Lys-D-Ala-D-Ala)](n+1)-di-trans,octa-cis-undecaprenyl diphosphate + di-trans,octa-cis-undecaprenyl diphosphate + H(+). It carries out the reaction Preferential cleavage: (Ac)2-L-Lys-D-Ala-|-D-Ala. Also transpeptidation of peptidyl-alanyl moieties that are N-acyl substituents of D-alanine.. The protein operates within cell wall biogenesis; peptidoglycan biosynthesis. Functionally, cell wall formation. Synthesis of cross-linked peptidoglycan from the lipid intermediates. The enzyme has a penicillin-insensitive transglycosylase N-terminal domain (formation of linear glycan strands) and a penicillin-sensitive transpeptidase C-terminal domain (cross-linking of the peptide subunits). The polypeptide is Penicillin-binding protein 1A (mrcA) (Pseudomonas aeruginosa (strain ATCC 15692 / DSM 22644 / CIP 104116 / JCM 14847 / LMG 12228 / 1C / PRS 101 / PAO1)).